Here is a 113-residue protein sequence, read N- to C-terminus: Flagellar hook-basal body complex protein FliE (113 aa).

It belongs to the FliE family.

The protein resides in the bacterial flagellum basal body. The protein is Flagellar hook-basal body complex protein FliE of Rhizobium etli (strain CIAT 652).